A 267-amino-acid polypeptide reads, in one-letter code: 2-keto-3-deoxy-L-rhamnonate aldolase (267 aa).

The active-site Proton acceptor is the His-49. Residue Gln-151 coordinates substrate. Mg(2+) is bound at residue Glu-153. Residues Ala-178 and Asp-179 each coordinate substrate. Asp-179 contributes to the Mg(2+) binding site.

Belongs to the HpcH/HpaI aldolase family. KDR aldolase subfamily. In terms of assembly, homohexamer. Mg(2+) is required as a cofactor.

The catalysed reaction is 2-dehydro-3-deoxy-L-rhamnonate = (S)-lactaldehyde + pyruvate. Functionally, catalyzes the reversible retro-aldol cleavage of 2-keto-3-deoxy-L-rhamnonate (KDR) to pyruvate and lactaldehyde. This is 2-keto-3-deoxy-L-rhamnonate aldolase from Salmonella paratyphi A (strain ATCC 9150 / SARB42).